Consider the following 933-residue polypeptide: Phosphoenolpyruvate carboxylase (933 aa).

Active-site residues include histidine 164 and lysine 595.

The protein belongs to the PEPCase type 1 family. Mg(2+) is required as a cofactor.

It catalyses the reaction oxaloacetate + phosphate = phosphoenolpyruvate + hydrogencarbonate. Functionally, forms oxaloacetate, a four-carbon dicarboxylic acid source for the tricarboxylic acid cycle. The chain is Phosphoenolpyruvate carboxylase from Rhodopseudomonas palustris (strain HaA2).